Consider the following 554-residue polypeptide: Raftlin (554 aa).

The N-myristoyl glycine moiety is linked to residue G2. A lipid anchor (S-palmitoyl cysteine) is attached at C3. Residues S183 and S199 each carry the phosphoserine modification. Disordered stretches follow at residues 192–249 (CTLG…NEAG), 441–488 (KKRE…DQFS), and 504–554 (GRAS…TEAN). Composition is skewed to basic and acidic residues over residues 198–209 (SSLENDTPKAAE) and 475–487 (QAEENEKNLEDQF). A phosphoserine mark is found at S507 and S530. Residues 526–542 (HNRDSVALRHSNPRAEA) are compositionally biased toward basic and acidic residues.

This sequence belongs to the raftlin family. In terms of assembly, interacts with TLR4; the interaction occurs in response to lipopolysaccharide stimulation. Interacts with CLTC; the interaction occurs in response to pathogens. Interacts with AP2A1 and AP2B1. Expressed in T-cells, B-cells, thymus and spleen (at protein level). Expressed in dendritic cells, macrophages, heart, lung and small intestine.

It localises to the cell membrane. The protein localises to the cytoplasm. Its subcellular location is the membrane raft. It is found in the endosome. The protein resides in the early endosome. Its function is as follows. Involved in protein trafficking via association with clathrin and AP2 complex. Upon bacterial lipopolysaccharide stimulation, mediates internalization of TLR4 to endosomes in dendritic cells and macrophages, and internalization of poly(I:C) to TLR3-positive endosomes in myeloid dendritic cells and epithelial cells; resulting in activation of TICAM1-mediated signaling and subsequent IFNB1 production. Involved in T-cell antigen receptor-mediated signaling by regulating tyrosine kinase LCK localization, T-cell dependent antibody production and cytokine secretion. May regulate B-cell antigen receptor-mediated signaling. May play a pivotal role in the formation and/or maintenance of lipid rafts. The sequence is that of Raftlin (Rftn1) from Mus musculus (Mouse).